Reading from the N-terminus, the 408-residue chain is LL-diaminopimelate aminotransferase (408 aa).

Positions 15 and 42 each coordinate substrate. Pyridoxal 5'-phosphate is bound by residues tyrosine 72, 108 to 109 (SK), tyrosine 132, asparagine 187, tyrosine 218, and 246 to 248 (SFS). The substrate site is built by lysine 109, tyrosine 132, and asparagine 187. An N6-(pyridoxal phosphate)lysine modification is found at lysine 249. Pyridoxal 5'-phosphate contacts are provided by arginine 257 and asparagine 292. Asparagine 292 and arginine 388 together coordinate substrate.

Belongs to the class-I pyridoxal-phosphate-dependent aminotransferase family. LL-diaminopimelate aminotransferase subfamily. As to quaternary structure, homodimer. Requires pyridoxal 5'-phosphate as cofactor.

The catalysed reaction is (2S,6S)-2,6-diaminopimelate + 2-oxoglutarate = (S)-2,3,4,5-tetrahydrodipicolinate + L-glutamate + H2O + H(+). The protein operates within amino-acid biosynthesis; L-lysine biosynthesis via DAP pathway; LL-2,6-diaminopimelate from (S)-tetrahydrodipicolinate (aminotransferase route): step 1/1. In terms of biological role, involved in the synthesis of meso-diaminopimelate (m-DAP or DL-DAP), required for both lysine and peptidoglycan biosynthesis. Catalyzes the direct conversion of tetrahydrodipicolinate to LL-diaminopimelate. This chain is LL-diaminopimelate aminotransferase, found in Prochlorococcus marinus (strain MIT 9211).